The chain runs to 147 residues: Large ribosomal subunit protein uL15 (147 aa).

The tract at residues 1–62 (MDLSNLRPAI…GQMPLQRRLP (62 aa)) is disordered. Composition is skewed to gly residues over residues 21-31 (RGPGSGNGKTA) and 42-52 (SGGGVKPGFEG).

The protein belongs to the universal ribosomal protein uL15 family. As to quaternary structure, part of the 50S ribosomal subunit.

Its function is as follows. Binds to the 23S rRNA. The protein is Large ribosomal subunit protein uL15 of Syntrophotalea carbinolica (strain DSM 2380 / NBRC 103641 / GraBd1) (Pelobacter carbinolicus).